Consider the following 466-residue polypeptide: Ribulose bisphosphate carboxylase large chain (466 aa).

Lys5 carries the N6,N6,N6-trimethyllysine modification. Substrate is bound by residues Asn114 and Thr164. The Proton acceptor role is filled by Lys166. Residue Lys168 participates in substrate binding. The Mg(2+) site is built by Lys192, Asp194, and Glu195. Lys192 carries the post-translational modification N6-carboxylysine. The active-site Proton acceptor is the His285. Arg286, His318, and Ser370 together coordinate substrate.

The protein belongs to the RuBisCO large chain family. Type I subfamily. In terms of assembly, heterohexadecamer of 8 large chains and 8 small chains; disulfide-linked. The disulfide link is formed within the large subunit homodimers. Mg(2+) serves as cofactor. In terms of processing, the disulfide bond which can form in the large chain dimeric partners within the hexadecamer appears to be associated with oxidative stress and protein turnover.

Its subcellular location is the plastid. The protein resides in the chloroplast. It catalyses the reaction 2 (2R)-3-phosphoglycerate + 2 H(+) = D-ribulose 1,5-bisphosphate + CO2 + H2O. The enzyme catalyses D-ribulose 1,5-bisphosphate + O2 = 2-phosphoglycolate + (2R)-3-phosphoglycerate + 2 H(+). Its function is as follows. RuBisCO catalyzes two reactions: the carboxylation of D-ribulose 1,5-bisphosphate, the primary event in carbon dioxide fixation, as well as the oxidative fragmentation of the pentose substrate in the photorespiration process. Both reactions occur simultaneously and in competition at the same active site. This chain is Ribulose bisphosphate carboxylase large chain, found in Drosera binata (Fork-leaved sundew).